Reading from the N-terminus, the 33-residue chain is Beta-theraphotoxin-Cm1b (33 aa).

3 cysteine pairs are disulfide-bonded: Cys-2/Cys-17, Cys-9/Cys-22, and Cys-16/Cys-29. Leu-33 is subject to Leucine amide.

This sequence belongs to the neurotoxin 10 (Hwtx-1) family. 04 (CcoTx1) subfamily. As to expression, expressed by the venom gland.

The protein localises to the secreted. Its function is as follows. Inhibits several voltage-gated sodium channels and only one voltage-gated calcium channel (Cav2.2/CACNA1B (IC(50)=1.1 uM) and Nav1.2/SCN2A (IC(50)=3.7-80 nM), Nav1.3/SCN3A (IC(50)=88-5570 nM), Nav1.1/SCN1A (IC(50)=170-407 nM), Nav1.7/SCN9A (IC(50)=95.5-230 nM), Nav1.6/SCN6A (IC(50)=49.9-3990 nM), Nav1.4/SCN4A (IC(50)=113-400 nM or &gt;10 uM), Nav1.5/SCN5A (IC(50)=1524-1634 nM or &gt;10 uM)). The toxin acts by shifting the voltage dependence of channel activation to more depolarized potentials and by blocking the inward component of the sodium current. It shows moderate affinity for lipid bilayers without cholesterol and high affinity for lipid bilayers containing cholesterol. In vivo, this toxin causes general ataxia, lack of response to stimuli, and semiparalysis. After a few minutes, the mice are unable to stand, and breathing is reduced in rhythm and intensity. Symptoms gradually increase with progressive slowing of breathing and flaccid paralysis; death occurred within 10 to 20 minutes post injection. Animals remain totally flaccid, and no symptoms of excitatory neurotoxicity are observed. This chain is Beta-theraphotoxin-Cm1b, found in Ceratogyrus marshalli (Straighthorned baboon tarantula).